We begin with the raw amino-acid sequence, 152 residues long: Erythema protein SVEP (152 aa).

The N-terminal stretch at 1–18 (MSITQSFFVLTLAIFGAA) is a signal peptide.

Salivary gland (at protein level).

The protein resides in the secreted. Functionally, salivary vasoactive peptide; induces vasodilatation in bioassay with rabbit aortic rings. The sequence is that of Erythema protein SVEP from Simulium vittatum (Striped black fly).